We begin with the raw amino-acid sequence, 344 residues long: Dihydroorotate dehydrogenase (quinone) (344 aa).

Residues 65 to 69 and Thr-89 each bind FMN; that span reads AGLDK. Lys-69 lines the substrate pocket. 114-118 is a binding site for substrate; it reads NRLGF. Asn-145 and Asn-178 together coordinate FMN. Asn-178 provides a ligand contact to substrate. Residue Ser-181 is the Nucleophile of the active site. Asn-183 is a substrate binding site. Positions 223 and 251 each coordinate FMN. Residue 252–253 participates in substrate binding; sequence NT. Residues Gly-274, Gly-303, and 324–325 each bind FMN; that span reads YT.

This sequence belongs to the dihydroorotate dehydrogenase family. Type 2 subfamily. In terms of assembly, monomer. Requires FMN as cofactor.

It is found in the cell membrane. The catalysed reaction is (S)-dihydroorotate + a quinone = orotate + a quinol. Its pathway is pyrimidine metabolism; UMP biosynthesis via de novo pathway; orotate from (S)-dihydroorotate (quinone route): step 1/1. In terms of biological role, catalyzes the conversion of dihydroorotate to orotate with quinone as electron acceptor. This chain is Dihydroorotate dehydrogenase (quinone), found in Methylibium petroleiphilum (strain ATCC BAA-1232 / LMG 22953 / PM1).